The primary structure comprises 601 residues: Mitochondrial tRNA methylthiotransferase CDK5RAP1 (601 aa).

Residues 1–33 (MHPLQCVLQVQRSLGWGPLASVSWLSLRMCRAH) constitute a mitochondrion transit peptide. The 121-residue stretch at 100-220 (RKVYLETYGC…LPRLLAVAES (121 aa)) folds into the MTTase N-terminal domain. 6 residues coordinate [4Fe-4S] cluster: C109, C145, C183, C258, C262, and C265. One can recognise a Radical SAM core domain in the interval 244–512 (SASATSAFVS…ITIFREEATK (269 aa)). In terms of domain architecture, TRAM spans 515 to 590 (QTSVGCTQLV…SQTLRGHVLC (76 aa)).

Belongs to the methylthiotransferase family. MiaB subfamily. Interacts with CDK5R1 (p35 form). CDK5RAP1, CDK5RAP2 and CDK5RAP3 show competitive binding to CDK5R1. Forms a complex with CDK5R1 and CDK5. It depends on [4Fe-4S] cluster as a cofactor. In terms of tissue distribution, expressed in heart, brain, placenta, lung, liver, skeletal muscle, kidney and pancreas. Expressed in neurons of central nervous tissue. As to expression, mainly expressed in brain, placenta and testis. High expression in placenta and lung.

The protein resides in the mitochondrion. The enzyme catalyses N(6)-dimethylallyladenosine(37) in tRNA + (sulfur carrier)-SH + AH2 + 2 S-adenosyl-L-methionine = 2-methylsulfanyl-N(6)-dimethylallyladenosine(37) in tRNA + (sulfur carrier)-H + 5'-deoxyadenosine + L-methionine + A + S-adenosyl-L-homocysteine + 2 H(+). Its function is as follows. Methylthiotransferase that catalyzes the conversion of N6-(dimethylallyl)adenosine (i(6)A) to 2-methylthio-N6-(dimethylallyl)adenosine (ms(2)i(6)A) at position 37 (adjacent to the 3'-end of the anticodon) of four mitochondrial DNA-encoded tRNAs (Ser(UCN), Phe, Tyr and Trp). Essential for efficient and highly accurate protein translation by the ribosome. Specifically inhibits CDK5 activation by CDK5R1. Essential for efficient mitochondrial protein synthesis and respiratory chain; shows pathological consequences in mitochondrial disease. This is Mitochondrial tRNA methylthiotransferase CDK5RAP1 from Homo sapiens (Human).